We begin with the raw amino-acid sequence, 334 residues long: TPR repeat-containing protein MJ0798 (334 aa).

7 TPR repeats span residues Trp-102–Thr-135, Leu-137–Asn-168, Tyr-169–Asp-202, Glu-204–Asp-235, Ile-236–Val-269, Glu-273–His-306, and Glu-308–Leu-333.

In Methanocaldococcus jannaschii (strain ATCC 43067 / DSM 2661 / JAL-1 / JCM 10045 / NBRC 100440) (Methanococcus jannaschii), this protein is TPR repeat-containing protein MJ0798.